A 1909-amino-acid chain; its full sequence is Endoribonuclease Dicer homolog 1 (1909 aa).

The disordered stretch occupies residues 99-177 (TVKENGLQKN…NNKKKRECNN (79 aa)). The span at 110-124 (GKRDEFSKEEGDKDR) shows a compositional bias: basic and acidic residues. The segment covering 131 to 146 (SYQSERSNLSGRGHVN) has biased composition (polar residues). Positions 147 to 177 (NSREGDRFMNRKRTRNWDEAGNNKKKRECNN) are enriched in basic and acidic residues. The 178-residue stretch at 256 to 433 (VLEQAKAKNT…QVDCAIKIRN (178 aa)) folds into the Helicase ATP-binding domain. Residue 269-276 (LETGAGKT) coordinates ATP. Residues 378–381 (DECH) carry the DECH box motif. The region spanning 651-812 (SLIKLLLKYQ…RTDLSHLKDT (162 aa)) is the Helicase C-terminal domain. Positions 840–935 (AVGLVHFYCS…LPDKGSGQDA (96 aa)) constitute a Dicer dsRNA-binding fold domain. Residues 929-952 (KGSGQDAEKADQDDEGEPVPGTAR) are disordered. A PAZ domain is found at 1189–1318 (EVEEDLSKGK…LPPELCVVHP (130 aa)). 2 RNase III domains span residues 1342 to 1518 (LAVQ…VEGG) and 1559 to 1707 (FVGL…LDSG). Positions 1597, 1693, and 1696 each coordinate Mg(2+). DRBM domains are found at residues 1733–1796 (HPVR…ALKE) and 1831–1906 (FTRQ…LLNK). The tract at residues 1801–1831 (ESKEKHINNGNAGEDQGENENGNKKNGHQPF) is disordered.

This sequence belongs to the helicase family. Dicer subfamily. In terms of assembly, interacts (via N-terminus) with DDL. Interacts (via DRBM domains) with DRB1, DRB2 and DRB5. May interact with AGO1 or AGO10 through their common PAZ domains. It depends on Mg(2+) as a cofactor. The cofactor is Mn(2+). Highly expressed in flowers and seeds and detected in leaves and stems. Found in ovule integuments, inflorescence and floral meristems, stigma of flowers until just before pollination, vasculature of the funiculus, and embryo.

The protein localises to the nucleus. Functionally, ribonuclease (RNase) III involved in RNA-mediated post-transcriptional gene silencing (PTGS). Functions in the microRNAs (miRNAs) biogenesis pathway by cleaving primary miRNAs (pri-miRNAs) and precursor miRNAs (pre-miRNAs). Functions with DRB1/HYL1 and SERRATE proteins for accurate pri-miRNAs to miRNAs processing. Indirectly involved in the production of trans-acting small interfering RNAs (ta-siRNAs) derived from the TAS1, TAS2 or TAS3 endogenous transcripts by participating in the production of their initiating miRNAs. Involved in the processing of natural siRNAs (nat-siRNAs, derived from cis-natural antisense transcripts) by cleaving 24 nucleotide nat-siRNAs into 21 nucleotide nat-siRNAs. Can produce RDR6-dependent endogenous ta-siRNAs derived from TAS1 and TAS2. Required for the production of 30-40 nucleotide bacterial-induced long siRNAs (lsiRNA). Acts redundantly with DICER-LIKE 3 (DCL3) to promote flowering via repression of FLOWERING LOCUS C (FLC). Represses antiviral RNA silencing through negative regulation of the expression of DCL4 and DCL3. In Arabidopsis thaliana (Mouse-ear cress), this protein is Endoribonuclease Dicer homolog 1 (DCL1).